A 144-amino-acid chain; its full sequence is Sirohydrochlorin cobaltochelatase (144 aa).

The active-site Proton acceptor is His-9. His-9 is a binding site for Co(2+). Ni(2+) is bound at residue His-9. Substrate is bound by residues Glu-45 and 70–75 (LAPGNH). Co(2+) is bound at residue His-75. His-75 contacts Ni(2+). The disordered stretch occupies residues 89–112 (GDDEGGHHHHHDHEHHHHHHDTTA). Over residues 95–108 (HHHHHDHEHHHHHH) the composition is skewed to basic residues.

The protein belongs to the CbiX family. CbiXS subfamily. In terms of assembly, homotetramer; dimer of dimers.

The enzyme catalyses Co-sirohydrochlorin + 2 H(+) = sirohydrochlorin + Co(2+). The catalysed reaction is Ni-sirohydrochlorin + 2 H(+) = sirohydrochlorin + Ni(2+). It participates in cofactor biosynthesis; adenosylcobalamin biosynthesis; cob(II)yrinate a,c-diamide from sirohydrochlorin (anaerobic route): step 1/10. In terms of biological role, catalyzes the insertion of Co(2+) into sirohydrochlorin as part of the anaerobic pathway to cobalamin biosynthesis. Involved in the biosynthesis of the unique nickel-containing tetrapyrrole coenzyme F430, the prosthetic group of methyl-coenzyme M reductase (MCR), which plays a key role in methanogenesis and anaerobic methane oxidation. Catalyzes the insertion of Ni(2+) into sirohydrochlorin to yield Ni-sirohydrochlorin. The protein is Sirohydrochlorin cobaltochelatase of Methanococcus maripaludis (strain DSM 14266 / JCM 13030 / NBRC 101832 / S2 / LL).